The following is a 227-amino-acid chain: Cytochrome c oxidase subunit 2 (227 aa).

At Met-1 to Ser-14 the chain is on the mitochondrial intermembrane side. Residues Pro-15–Met-45 form a helical membrane-spanning segment. The Mitochondrial matrix segment spans residues Leu-46–Gln-59. The chain crosses the membrane as a helical span at residues Glu-60–Met-87. The Mitochondrial intermembrane portion of the chain corresponds to Asp-88 to Leu-227. Cu cation contacts are provided by His-161, Cys-196, Glu-198, Cys-200, His-204, and Met-207. Glu-198 contributes to the Mg(2+) binding site.

This sequence belongs to the cytochrome c oxidase subunit 2 family. In terms of assembly, component of the cytochrome c oxidase (complex IV, CIV), a multisubunit enzyme composed of 14 subunits. The complex is composed of a catalytic core of 3 subunits MT-CO1, MT-CO2 and MT-CO3, encoded in the mitochondrial DNA, and 11 supernumerary subunits COX4I, COX5A, COX5B, COX6A, COX6B, COX6C, COX7A, COX7B, COX7C, COX8 and NDUFA4, which are encoded in the nuclear genome. The complex exists as a monomer or a dimer and forms supercomplexes (SCs) in the inner mitochondrial membrane with NADH-ubiquinone oxidoreductase (complex I, CI) and ubiquinol-cytochrome c oxidoreductase (cytochrome b-c1 complex, complex III, CIII), resulting in different assemblies (supercomplex SCI(1)III(2)IV(1) and megacomplex MCI(2)III(2)IV(2)). Found in a complex with TMEM177, COA6, COX18, COX20, SCO1 and SCO2. Interacts with TMEM177 in a COX20-dependent manner. Interacts with COX20. Interacts with COX16. It depends on Cu cation as a cofactor.

It localises to the mitochondrion inner membrane. The enzyme catalyses 4 Fe(II)-[cytochrome c] + O2 + 8 H(+)(in) = 4 Fe(III)-[cytochrome c] + 2 H2O + 4 H(+)(out). In terms of biological role, component of the cytochrome c oxidase, the last enzyme in the mitochondrial electron transport chain which drives oxidative phosphorylation. The respiratory chain contains 3 multisubunit complexes succinate dehydrogenase (complex II, CII), ubiquinol-cytochrome c oxidoreductase (cytochrome b-c1 complex, complex III, CIII) and cytochrome c oxidase (complex IV, CIV), that cooperate to transfer electrons derived from NADH and succinate to molecular oxygen, creating an electrochemical gradient over the inner membrane that drives transmembrane transport and the ATP synthase. Cytochrome c oxidase is the component of the respiratory chain that catalyzes the reduction of oxygen to water. Electrons originating from reduced cytochrome c in the intermembrane space (IMS) are transferred via the dinuclear copper A center (CU(A)) of subunit 2 and heme A of subunit 1 to the active site in subunit 1, a binuclear center (BNC) formed by heme A3 and copper B (CU(B)). The BNC reduces molecular oxygen to 2 water molecules using 4 electrons from cytochrome c in the IMS and 4 protons from the mitochondrial matrix. This chain is Cytochrome c oxidase subunit 2 (MT-CO2), found in Microcebus tavaratra (Northern rufous mouse lemur).